The chain runs to 118 residues: Co-chaperonin GroES (118 aa).

The protein belongs to the GroES chaperonin family. Heptamer of 7 subunits arranged in a ring. Interacts with the chaperonin GroEL.

The protein resides in the cytoplasm. Its function is as follows. Together with the chaperonin GroEL, plays an essential role in assisting protein folding. The GroEL-GroES system forms a nano-cage that allows encapsulation of the non-native substrate proteins and provides a physical environment optimized to promote and accelerate protein folding. GroES binds to the apical surface of the GroEL ring, thereby capping the opening of the GroEL channel. This chain is Co-chaperonin GroES, found in Helicobacter pylori (strain P12).